The sequence spans 361 residues: Peptide chain release factor 1 (361 aa).

Residue glutamine 233 is modified to N5-methylglutamine. Basic and acidic residues predominate over residues 280 to 293 (ERRKKEQERADSRR). Residues 280 to 307 (ERRKKEQERADSRRGQVGSGDRSERIRT) form a disordered region.

The protein belongs to the prokaryotic/mitochondrial release factor family. Methylated by PrmC. Methylation increases the termination efficiency of RF1.

It is found in the cytoplasm. In terms of biological role, peptide chain release factor 1 directs the termination of translation in response to the peptide chain termination codons UAG and UAA. The polypeptide is Peptide chain release factor 1 (Rickettsia massiliae (strain Mtu5)).